The following is a 582-amino-acid chain: Semenogelin-2 (582 aa).

The signal sequence occupies residues 1–23; that stretch reads MKSIILFVLSLLLILEKQAAVMG. Disordered regions lie at residues 25 to 62, 131 to 156, 173 to 192, 272 to 477, and 502 to 554; these read KGGS…SKGS, KGGQ…KGIF, KEQA…GSQS, NLNQ…EQRQ, and VEGK…SGAH. Positions 50 to 59 are enriched in basic and acidic residues; the sequence is GQKDKQHTES. Polar residues-rich tracts occupy residues 137–151 and 174–192; these read HGTQ…NSPS and EQAS…GSQS. The span at 292 to 310 shows a compositional bias: basic and acidic residues; it reads RTEERQLNHGEKSVQKDVS. Positions 325–335 are enriched in polar residues; sequence KSQNQVTIPSQ. The span at 336–345 shows a compositional bias: basic and acidic residues; the sequence is DQEHGHKENK. Positions 385-395 are enriched in polar residues; that stretch reads KSQNQVTIPSQ. The span at 396 to 405 shows a compositional bias: basic and acidic residues; that stretch reads DQEHGHKENK. The span at 445 to 455 shows a compositional bias: polar residues; the sequence is KSQNQVTIPSQ. Over residues 456 to 465 the composition is skewed to basic and acidic residues; that stretch reads DQEHGHKENK. 2 stretches are compositionally biased toward polar residues: residues 466-477 and 506-529; these read ISYQSSSTEQRQ and SQIQ…NSGK. A compositionally biased stretch (basic and acidic residues) spans 537–546; the sequence is LLSHEQEGRY.

The protein belongs to the semenogelin family. Interacts with SERPINA5.

It is found in the secreted. Its function is as follows. Participates in the formation of a gel matrix (sperm coagulum) entrapping the accessory gland secretions and ejaculated spermatozoa. The chain is Semenogelin-2 (SEMG2) from Macaca nemestrina (Pig-tailed macaque).